We begin with the raw amino-acid sequence, 323 residues long: CIMIP2 protein CG18335 (323 aa).

The protein belongs to the CIMIP2 family.

The protein resides in the cytoplasm. It localises to the cytoskeleton. Its subcellular location is the cilium axoneme. Functionally, probable microtubule inner protein (MIP) part of the dynein-decorated doublet microtubules (DMTs) in cilium axoneme. The chain is CIMIP2 protein CG18335 from Drosophila melanogaster (Fruit fly).